The primary structure comprises 430 residues: UPF0597 protein CV_1824 (430 aa).

Belongs to the UPF0597 family.

This chain is UPF0597 protein CV_1824, found in Chromobacterium violaceum (strain ATCC 12472 / DSM 30191 / JCM 1249 / CCUG 213 / NBRC 12614 / NCIMB 9131 / NCTC 9757 / MK).